A 1006-amino-acid chain; its full sequence is Pleckstrin homology domain-containing family G member 5 (1006 aa).

3 disordered regions span residues 1–71 (MHYD…HTDD), 148–198 (PAKP…DILA), and 212–242 (EASIPGQEPPTPSSCSLPSGSSGSTNTGDSW). A compositionally biased stretch (acidic residues) spans 36–45 (DLEEEEEESS). Basic and acidic residues-rich tracts occupy residues 151 to 165 (PGDEGKVEQGMKDSK) and 183 to 194 (ERVDAQSRRESL). Positions 224–242 (SSCSLPSGSSGSTNTGDSW) are enriched in low complexity. In terms of domain architecture, DH spans 336 to 528 (HQQEAVWELL…ERFIHHVNAC (193 aa)). Residues 584–684 (QLLLEGSLRM…WVDTIYNAQN (101 aa)) enclose the PH domain. Disordered regions lie at residues 690-754 (RAQE…ASDG), 768-820 (DTLS…SAYG), and 837-863 (AELVPRAPESPRVPSPPPSPRLRRRTP). Over residues 704 to 726 (LEEEEDEQEEEEEEEEEEEEGED) the composition is skewed to acidic residues. Composition is skewed to polar residues over residues 727 to 754 (SGTSAASSPTIMRKSSGSPDSQHCASDG) and 769 to 785 (TLSSPEFDSGPFSSQSD). Residue Thr729 is modified to Phosphothreonine. Position 734 is a phosphoserine (Ser734). Positions 786–803 (ETSLSTTASSATPTSELL) are enriched in low complexity. Positions 847 to 856 (PRVPSPPPSP) are enriched in pro residues. Residues Ser851, Ser876, and Ser881 each carry the phosphoserine modification. Positions 950–979 (AGSHRKRCGDLPSGASPRVQPEPPPGVSAQ) are disordered.

As to quaternary structure, interacts with GIPC1/synectin and RHOA. Predominantly expressed in the peripheral nervous system and brain. Highest expression is observed in heart, lung, kidney, testis and moderate expression is present in spleen, pancreas, skeletal muscle, ovary and liver. Weakly expressed in glioblastoma (GBM) cell lines.

The protein resides in the cytoplasm. It is found in the perinuclear region. The protein localises to the cell membrane. It localises to the cell junction. Its subcellular location is the cell projection. The protein resides in the lamellipodium. Functionally, functions as a guanine exchange factor (GEF) for RAB26 and thus regulates autophagy of synaptic vesicles in axon terminal of motoneurons. Involved in the control of neuronal cell differentiation. Plays a role in angiogenesis through regulation of endothelial cells chemotaxis. Also affects the migration, adhesion, and matrix/bone degradation in macrophages and osteoclasts. The sequence is that of Pleckstrin homology domain-containing family G member 5 (PLEKHG5) from Homo sapiens (Human).